Here is a 163-residue protein sequence, read N- to C-terminus: MKELEKYSTCLKRIDEFSQNLGIKKKDRTIFKMKQSENENEKCLVLENGSFDSPEPWFVIDENDEIHTLLSLQSLKNILESLKQSQKENFELRLEKAIYQQIPVDFNDVWTVAMDEIKQKAQNGTMEVSIDLEKLISKIKQEHPNLFVDMQAMIERVNQNERL.

This sequence belongs to the UPF0763 family.

The protein is UPF0763 protein C8J_0930 of Campylobacter jejuni subsp. jejuni serotype O:6 (strain 81116 / NCTC 11828).